The chain runs to 311 residues: Triacylglycerol lipase (311 aa).

Residues 1–26 form the signal peptide; that stretch reads MKKKSLLPLGLAIGLASLAASPLIQA. Positions 35 to 280 constitute an AB hydrolase-1 domain; the sequence is PIVLAHGMLG…DNYRMNHLDE (246 aa). Methionine 42 is a substrate binding site. Serine 108 serves as the catalytic Nucleophile. Histidine 109 serves as a coordination point for substrate. Cysteine 209 and cysteine 261 form a disulfide bridge. Aspartate 235 serves as a coordination point for Ca(2+). Residues aspartate 255 and histidine 277 each act as charge relay system in the active site. 3 residues coordinate Ca(2+): aspartate 279, glutamine 283, and leucine 287.

This sequence belongs to the AB hydrolase superfamily. Pseudomonas lipase family. As to quaternary structure, monomer. Requires Ca(2+) as cofactor.

The protein localises to the secreted. The enzyme catalyses a triacylglycerol + H2O = a diacylglycerol + a fatty acid + H(+). With respect to regulation, na(+) increases lipase activity. Inhibited by diethyl p-nitrophenyl phosphate and 3,4-dichloroisocoumarin (DCI). Its function is as follows. Catalyzes the hydrolysis of triacylglycerol. It also exhibits some esterase activity with p-nitrophenyl acetate and Tween 80 as substrates, however the lipase activity is approximately eight times the esterase activity. It shows a marked specificity for the 1,3-oleyl residues of triolein. The protein is Triacylglycerol lipase of Pseudomonas aeruginosa (strain ATCC 15692 / DSM 22644 / CIP 104116 / JCM 14847 / LMG 12228 / 1C / PRS 101 / PAO1).